A 485-amino-acid polypeptide reads, in one-letter code: NADH-quinone oxidoreductase subunit N (485 aa).

14 consecutive transmembrane segments (helical) span residues Leu-8–Ile-28, Phe-35–Val-55, Gly-71–Ala-91, Phe-105–Leu-125, Ser-127–Phe-147, Tyr-159–Ala-179, Leu-203–Phe-223, Pro-235–Met-255, Val-271–Gln-291, Leu-297–Gln-317, Val-326–Leu-346, Ala-373–Ile-393, Trp-408–Val-430, and Ile-455–Ile-475.

This sequence belongs to the complex I subunit 2 family. NDH-1 is composed of 13 different subunits. Subunits NuoA, H, J, K, L, M, N constitute the membrane sector of the complex.

The protein resides in the cell inner membrane. It catalyses the reaction a quinone + NADH + 5 H(+)(in) = a quinol + NAD(+) + 4 H(+)(out). Functionally, NDH-1 shuttles electrons from NADH, via FMN and iron-sulfur (Fe-S) centers, to quinones in the respiratory chain. The immediate electron acceptor for the enzyme in this species is believed to be ubiquinone. Couples the redox reaction to proton translocation (for every two electrons transferred, four hydrogen ions are translocated across the cytoplasmic membrane), and thus conserves the redox energy in a proton gradient. The chain is NADH-quinone oxidoreductase subunit N from Shigella boydii serotype 18 (strain CDC 3083-94 / BS512).